A 243-amino-acid chain; its full sequence is 1-(5-phosphoribosyl)-5-[(5-phosphoribosylamino)methylideneamino] imidazole-4-carboxamide isomerase (243 aa).

The active-site Proton acceptor is the aspartate 14. The active-site Proton donor is the aspartate 135.

It belongs to the HisA/HisF family.

The protein localises to the cytoplasm. The catalysed reaction is 1-(5-phospho-beta-D-ribosyl)-5-[(5-phospho-beta-D-ribosylamino)methylideneamino]imidazole-4-carboxamide = 5-[(5-phospho-1-deoxy-D-ribulos-1-ylimino)methylamino]-1-(5-phospho-beta-D-ribosyl)imidazole-4-carboxamide. It functions in the pathway amino-acid biosynthesis; L-histidine biosynthesis; L-histidine from 5-phospho-alpha-D-ribose 1-diphosphate: step 4/9. In Rubrobacter xylanophilus (strain DSM 9941 / JCM 11954 / NBRC 16129 / PRD-1), this protein is 1-(5-phosphoribosyl)-5-[(5-phosphoribosylamino)methylideneamino] imidazole-4-carboxamide isomerase.